We begin with the raw amino-acid sequence, 38 residues long: Trypsin inhibitor 2 (38 aa).

Position 1 is a pyrrolidone carboxylic acid (Gln-1).

Post-translationally, contains disulfide bonds.

Its function is as follows. Inhibits trypsin-like proteases from the guts of the insect pests P.truncatus, P.americana, Acheta sp and Gryllus sp. The polypeptide is Trypsin inhibitor 2 (Opuntia streptacantha (Prickly pear cactus)).